A 113-amino-acid polypeptide reads, in one-letter code: Antisense of depressing factor protein 1 (113 aa).

Over residues 1–11 (MGKCSMKKKGV) the composition is skewed to basic residues. A disordered region spans residues 1 to 35 (MGKCSMKKKGVGKNVGVGKKVQKKRSISTAERKRT).

It belongs to the ADF1 family.

It localises to the nucleus. Transcriptional repressor which negatively regulates transcription of FYV5 by binding to the promoter on the sense strand. In Saccharomyces cerevisiae (strain ATCC 204508 / S288c) (Baker's yeast), this protein is Antisense of depressing factor protein 1.